The primary structure comprises 354 residues: Holliday junction branch migration complex subunit RuvB (354 aa).

The interval 1–38 (MSDFERTEFELPPGVGHSQNEDLNPQQTAGDSDIDTSL) is disordered. The segment at 2 to 199 (SDFERTEFEL…FGFTAQMEFY (198 aa)) is large ATPase domain (RuvB-L). Over residues 17–30 (HSQNEDLNPQQTAG) the composition is skewed to polar residues. Residues leucine 38, arginine 39, glycine 80, lysine 83, threonine 84, threonine 85, 146 to 148 (EDF), arginine 189, tyrosine 199, and arginine 236 each bind ATP. Threonine 84 is a binding site for Mg(2+). The segment at 200–270 (DTADLTRVVT…VARAALLVFD (71 aa)) is small ATPAse domain (RuvB-S). Residues 273–354 (ESGLDRLDRA…LEPPEGTIGL (82 aa)) form a head domain (RuvB-H) region. Positions 328 and 333 each coordinate DNA.

This sequence belongs to the RuvB family. As to quaternary structure, homohexamer. Forms an RuvA(8)-RuvB(12)-Holliday junction (HJ) complex. HJ DNA is sandwiched between 2 RuvA tetramers; dsDNA enters through RuvA and exits via RuvB. An RuvB hexamer assembles on each DNA strand where it exits the tetramer. Each RuvB hexamer is contacted by two RuvA subunits (via domain III) on 2 adjacent RuvB subunits; this complex drives branch migration. In the full resolvosome a probable DNA-RuvA(4)-RuvB(12)-RuvC(2) complex forms which resolves the HJ.

The protein resides in the cytoplasm. The catalysed reaction is ATP + H2O = ADP + phosphate + H(+). Its function is as follows. The RuvA-RuvB-RuvC complex processes Holliday junction (HJ) DNA during genetic recombination and DNA repair, while the RuvA-RuvB complex plays an important role in the rescue of blocked DNA replication forks via replication fork reversal (RFR). RuvA specifically binds to HJ cruciform DNA, conferring on it an open structure. The RuvB hexamer acts as an ATP-dependent pump, pulling dsDNA into and through the RuvAB complex. RuvB forms 2 homohexamers on either side of HJ DNA bound by 1 or 2 RuvA tetramers; 4 subunits per hexamer contact DNA at a time. Coordinated motions by a converter formed by DNA-disengaged RuvB subunits stimulates ATP hydrolysis and nucleotide exchange. Immobilization of the converter enables RuvB to convert the ATP-contained energy into a lever motion, pulling 2 nucleotides of DNA out of the RuvA tetramer per ATP hydrolyzed, thus driving DNA branch migration. The RuvB motors rotate together with the DNA substrate, which together with the progressing nucleotide cycle form the mechanistic basis for DNA recombination by continuous HJ branch migration. Branch migration allows RuvC to scan DNA until it finds its consensus sequence, where it cleaves and resolves cruciform DNA. In Corynebacterium jeikeium (strain K411), this protein is Holliday junction branch migration complex subunit RuvB.